The chain runs to 956 residues: Nitrogen regulatory protein NUT1 (956 aa).

A compositionally biased stretch (basic and acidic residues) spans 1 to 12; the sequence is MNPTITEHDFRF. Disordered regions lie at residues 1-51, 120-222, 240-262, 348-373, and 524-661; these read MNPT…NDAQ, QQEE…PAAA, KTSI…FQVP, GQSI…SQVS, and TLPG…DAPT. Residues 15–37 are compositionally biased toward low complexity; sequence RPAAPGRDPGSDSSDDPLPASLR. 4 stretches are compositionally biased toward polar residues: residues 42-51, 131-153, 167-194, and 208-217; these read DRQSAFNDAQ, PLKT…QKKS, SHGS…NAIS, and AAQSQFNPQS. Residues 588–613 are compositionally biased toward polar residues; it reads NASTTAIPNSQMQYEQQGVQGHTNSP. Composition is skewed to low complexity over residues 623-633 and 640-661; these read SGFSSVVHSRP and SKNG…DAPT. The GATA-type zinc finger occupies 663–687; the sequence is CTNCATQTTPLWRRNPEGQPLCNAC. The segment at 708-890 is disordered; the sequence is KKRNRGSGSN…AATRPSGFGT (183 aa). Positions 713 to 760 are enriched in polar residues; it reads GSGSNVPGATSGSRSKKGATSTAVSGTNTRKNSSLAISRTASTTNVQV. Over residues 812–839 the composition is skewed to low complexity; sequence VVPIAAAPPKNMPGPGAAAAARTVALGP. 2 stretches are compositionally biased toward polar residues: residues 849–863 and 872–881; these read SPAN…NANH and PENSTGSNEA.

It is found in the nucleus. Major nitrogen regulatory protein; activates expression of nitrogen-regulated genes. The chain is Nitrogen regulatory protein NUT1 (NUT1) from Pyricularia oryzae (strain 70-15 / ATCC MYA-4617 / FGSC 8958) (Rice blast fungus).